The sequence spans 414 residues: Argininosuccinate synthase (414 aa).

Residues 15-23 and Ala-42 each bind ATP; that span reads AYSGGLDTS. Residues Tyr-93 and Ser-98 each coordinate L-citrulline. An ATP-binding site is contributed by Gly-123. Residues Thr-125, Asn-129, and Asp-130 each contribute to the L-aspartate site. Asn-129 contacts L-citrulline. 5 residues coordinate L-citrulline: Arg-133, Ser-182, Ser-191, Glu-267, and Tyr-279.

Belongs to the argininosuccinate synthase family. Type 1 subfamily. Homotetramer.

Its subcellular location is the cytoplasm. The enzyme catalyses L-citrulline + L-aspartate + ATP = 2-(N(omega)-L-arginino)succinate + AMP + diphosphate + H(+). It participates in amino-acid biosynthesis; L-arginine biosynthesis; L-arginine from L-ornithine and carbamoyl phosphate: step 2/3. This is Argininosuccinate synthase from Deinococcus geothermalis (strain DSM 11300 / CIP 105573 / AG-3a).